The primary structure comprises 1481 residues: Cystic fibrosis transmembrane conductance regulator (1481 aa).

The Cytoplasmic segment spans residues Met-1–Phe-77. The chain crosses the membrane as a helical span at residues Phe-78–Gln-98. An ABC transmembrane type-1 1 domain is found at Phe-81 to Leu-365. The Extracellular segment spans residues Pro-99–Tyr-122. The chain crosses the membrane as a helical span at residues Leu-123–His-146. Residues His-147 to Leu-195 lie on the Cytoplasmic side of the membrane. The chain crosses the membrane as a helical span at residues Ala-196 to Trp-216. Topologically, residues Glu-217 to Phe-222 are extracellular. The chain crosses the membrane as a helical span at residues Thr-223 to Met-243. Residues Met-244–Lys-298 lie on the Cytoplasmic side of the membrane. The helical transmembrane segment at Ala-299–Phe-319 threads the bilayer. The Extracellular portion of the chain corresponds to Leu-320–Thr-339. The helical transmembrane segment at Ile-340–Val-358 threads the bilayer. Over Gln-359–Ser-858 the chain is Cytoplasmic. ATP is bound by residues Trp-401, Gly-457–Thr-464, and Gln-492. The ABC transporter 1 domain occupies Asn-423–Gly-645. Cys-523 carries S-palmitoyl cysteine lipidation. 2 positions are modified to phosphoserine: Ser-548 and Ser-659. The interval Thr-653 to Asp-831 is disordered R region. Phosphoserine; by PKA is present on Ser-669. A Phosphoserine modification is found at Ser-685. A Glycyl lysine isopeptide (Lys-Gly) (interchain with G-Cter in ubiquitin) cross-link involves residue Lys-687. Phosphoserine occurs at positions 699 and 711. Thr-716 carries the post-translational modification Phosphothreonine. Phosphoserine occurs at positions 736, 767, 790, 795, and 813. Residues Leu-859–Val-879 form a helical membrane-spanning segment. The 297-residue stretch at Leu-859–Ser-1155 folds into the ABC transmembrane type-1 2 domain. The Extracellular segment spans residues Val-880–Ile-918. N-linked (GlcNAc...) asparagine glycosylation is found at Asn-894 and Asn-900. The chain crosses the membrane as a discontinuously helical span at residues Tyr-919–His-939. The Cytoplasmic portion of the chain corresponds to Thr-940 to Thr-990. A helical membrane pass occupies residues Ile-991–Leu-1011. The Extracellular portion of the chain corresponds to Gln-1012–Pro-1013. A helical transmembrane segment spans residues Tyr-1014 to Leu-1034. Residues His-1035–Thr-1095 lie on the Cytoplasmic side of the membrane. Residues Leu-1096–Phe-1116 traverse the membrane as a helical segment. The Extracellular segment spans residues Ile-1117 to Gly-1130. A helical transmembrane segment spans residues Ile-1131–Ile-1151. Over Asp-1152–Leu-1481 the chain is Cytoplasmic. The 234-residue stretch at Met-1211–Pro-1444 folds into the ABC transporter 2 domain. ATP-binding positions include Tyr-1220 and Gly-1245–Ser-1252. The interval Arg-1387 to Leu-1481 is interaction with GORASP2. Residue Cys-1396 is the site of S-palmitoyl cysteine attachment. The disordered stretch occupies residues Pro-1452–Leu-1481. Positions Gln-1453–Asn-1464 are enriched in low complexity. Position 1457 is a phosphoserine (Ser-1457). Over residues Glu-1471–Leu-1481 the composition is skewed to acidic residues. The PDZ-binding motif lies at Thr-1479–Leu-1481.

Belongs to the ABC transporter superfamily. ABCC family. CFTR transporter (TC 3.A.1.202) subfamily. As to quaternary structure, monomer; does not require oligomerization for channel activity. May form oligomers in the membrane. Interacts with SLC26A3, SLC26A6 and NHERF1. Interacts with SHANK2. Interacts with MYO6. Interacts (via C-terminus) with GOPC (via PDZ domain); this promotes CFTR internalization and thereby decreases channel activity. Interacts with SLC4A7 through NHERF1. Found in a complex with MYO5B and RAB11A. Interacts with ANO1. Interacts with SLC26A8. Interacts with AHCYL1; the interaction increases CFTR activity. Interacts with CSE1L. The core-glycosylated form interacts with GORASP2 (via PDZ GRASP-type 1 domain) in respone to ER stress. Interacts with MARCHF2; the interaction leads to CFTR ubiqtuitination and degradation. Interacts with ADGRG2. Post-translationally, N-glycosylated. In terms of processing, phosphorylated; cAMP treatment promotes phosphorylation and activates the channel. Dephosphorylation decreases the ATPase activity (in vitro). Phosphorylation at PKA sites activates the channel. Phosphorylation at PKC sites enhances the response to phosphorylation by PKA. Phosphorylated by AMPK; this inhibits channel activity. Ubiquitinated, leading to its degradation in the lysosome. Deubiquitination by USP10 in early endosomes enhances its endocytic recycling to the cell membrane. Ubiquitinated by RNF185 during ER stress. Ubiquitinated by MARCHF2.

The protein resides in the apical cell membrane. Its subcellular location is the early endosome membrane. It localises to the cell membrane. The protein localises to the recycling endosome membrane. It is found in the endoplasmic reticulum membrane. The protein resides in the nucleus. It catalyses the reaction ATP + H2O + closed Cl(-) channel = ADP + phosphate + open Cl(-) channel.. It carries out the reaction chloride(in) = chloride(out). The catalysed reaction is hydrogencarbonate(in) = hydrogencarbonate(out). The enzyme catalyses ATP + H2O = ADP + phosphate + H(+). Its function is as follows. Epithelial ion channel that plays an important role in the regulation of epithelial ion and water transport and fluid homeostasis. Mediates the transport of chloride ions across the cell membrane. Possesses an intrinsic ATPase activity and utilizes ATP to gate its channel; the passive flow of anions through the channel is gated by cycles of ATP binding and hydrolysis by the ATP-binding domains. The ion channel is also permeable to HCO(3)(-); selectivity depends on the extracellular chloride concentration. Exerts its function also by modulating the activity of other ion channels and transporters. Contributes to the regulation of the pH and the ion content of the epithelial fluid layer. Modulates the activity of the epithelial sodium channel (ENaC) complex, in part by regulating the cell surface expression of the ENaC complex. May regulate bicarbonate secretion and salvage in epithelial cells by regulating the transporter SLC4A7. Can inhibit the chloride channel activity of ANO1. Plays a role in the chloride and bicarbonate homeostasis during sperm epididymal maturation and capacitation. This Muntiacus muntjak (Barking deer) protein is Cystic fibrosis transmembrane conductance regulator.